The sequence spans 129 residues: Small ribosomal subunit protein uS11 (129 aa).

It belongs to the universal ribosomal protein uS11 family. In terms of assembly, part of the 30S ribosomal subunit. Interacts with proteins S7 and S18. Binds to IF-3.

Functionally, located on the platform of the 30S subunit, it bridges several disparate RNA helices of the 16S rRNA. Forms part of the Shine-Dalgarno cleft in the 70S ribosome. This chain is Small ribosomal subunit protein uS11, found in Macrococcus caseolyticus (strain JCSC5402) (Macrococcoides caseolyticum).